A 742-amino-acid polypeptide reads, in one-letter code: Kanadaptin (742 aa).

A compositionally biased stretch (polar residues) spans 1–16; that stretch reads MADILSQSETLASQDL. The disordered stretch occupies residues 1–112; it reads MADILSQSET…PPWGGPATAP (112 aa). Over residues 27-43 the composition is skewed to low complexity; that stretch reads VSPAARSKAPASSSSNP. Phosphoserine is present on S28. Over residues 72 to 82 the composition is skewed to basic and acidic residues; the sequence is GDFRSLQEEQS. The residue at position 90 (S90) is a Phosphoserine. The segment covering 96–106 has biased composition (pro residues); it reads RAPPYQEPPWG. The FHA domain occupies 135–195; that stretch reads CLFGRLSGCD…HGTFLNKTRI (61 aa). Residues 254–282 are disordered; the sequence is LGEDSDEEEEMDTSERKINAGSQDDEMGC. Over residues 256–265 the composition is skewed to acidic residues; it reads EDSDEEEEMD. Residues S258 and S412 each carry the phosphoserine modification. A Glycyl lysine isopeptide (Lys-Gly) (interchain with G-Cter in SUMO2) cross-link involves residue K441. A coiled-coil region spans residues 443 to 476; it reads ETFESLVAKLNDAERELSEISERLKASSQVLSES. S476 carries the phosphoserine modification. The tract at residues 565 to 742 is disordered; that stretch reads LKTGTVGKLP…RTHLNDKYGY (178 aa). A compositionally biased stretch (acidic residues) spans 591–606; the sequence is PEVEEEEEEEEEEEKE. Basic and acidic residues predominate over residues 607–619; it reads KEEHEKKKLEDGS. S655 and S658 each carry phosphoserine. A compositionally biased stretch (low complexity) spans 699 to 708; it reads PGPGKLPPTL. Residues 732 to 742 show a composition bias toward basic and acidic residues; that stretch reads GRTHLNDKYGY.

In terms of tissue distribution, ubiquitously expressed.

The protein resides in the nucleus. It localises to the cytoplasm. This is Kanadaptin (SLC4A1AP) from Homo sapiens (Human).